The following is a 167-amino-acid chain: Large ribosomal subunit protein uL10 (167 aa).

Belongs to the universal ribosomal protein uL10 family. As to quaternary structure, part of the ribosomal stalk of the 50S ribosomal subunit. The N-terminus interacts with L11 and the large rRNA to form the base of the stalk. The C-terminus forms an elongated spine to which L12 dimers bind in a sequential fashion forming a multimeric L10(L12)X complex.

In terms of biological role, forms part of the ribosomal stalk, playing a central role in the interaction of the ribosome with GTP-bound translation factors. This Latilactobacillus sakei subsp. sakei (strain 23K) (Lactobacillus sakei subsp. sakei) protein is Large ribosomal subunit protein uL10.